A 109-amino-acid polypeptide reads, in one-letter code: MTVAKSVALFAVAALFEIGGAWLVWQGVREHRGWIWIGAGVAALGAYGFVATLQPDAHFGRILAAYGGVFVAGSLIWGMVADGFRPDRWDVSGALICLLGMAVIMYAPR.

The next 4 membrane-spanning stretches (helical) occupy residues 7-27 (VALFAVAALFEIGGAWLVWQG), 33-53 (GWIWIGAGVAALGAYGFVATL), 62-82 (ILAAYGGVFVAGSLIWGMVAD), and 88-108 (RWDVSGALICLLGMAVIMYAP).

Belongs to the UPF0060 family.

It is found in the cell membrane. This chain is UPF0060 membrane protein RHA1_ro06609, found in Rhodococcus jostii (strain RHA1).